Reading from the N-terminus, the 276-residue chain is NADPH-dependent 7-cyano-7-deazaguanine reductase (276 aa).

83 to 85 (IES) provides a ligand contact to substrate. 85 to 86 (SK) contacts NADPH. Cys184 serves as the catalytic Thioimide intermediate. Asp191 (proton donor) is an active-site residue. Residue 223-224 (HE) participates in substrate binding. 252-253 (RG) is an NADPH binding site.

The protein belongs to the GTP cyclohydrolase I family. QueF type 2 subfamily. As to quaternary structure, homodimer.

It is found in the cytoplasm. It carries out the reaction 7-aminomethyl-7-carbaguanine + 2 NADP(+) = 7-cyano-7-deazaguanine + 2 NADPH + 3 H(+). It participates in tRNA modification; tRNA-queuosine biosynthesis. Functionally, catalyzes the NADPH-dependent reduction of 7-cyano-7-deazaguanine (preQ0) to 7-aminomethyl-7-deazaguanine (preQ1). This Pseudomonas syringae pv. syringae (strain B728a) protein is NADPH-dependent 7-cyano-7-deazaguanine reductase.